We begin with the raw amino-acid sequence, 241 residues long: Glutathione S-transferase omega-1 (241 aa).

Serine 2 carries the N-acetylserine modification. Residues 22 to 101 (GLIRVYSMRF…YLDEAYPGKK (80 aa)) form the GST N-terminal domain. The active-site Nucleophile is the cysteine 32. An N6-acetyllysine modification is found at lysine 57. Glutathione contacts are provided by residues lysine 59, valine 72, and 85 to 86 (ES). The region spanning 106–225 (DPYEKACQKM…HIEPRDLRAF (120 aa)) is the GST C-terminal domain. N6-acetyllysine occurs at positions 143, 148, and 152.

As to quaternary structure, homodimer. In terms of tissue distribution, most abundant in the liver and skeletal muscle; also expressed in heart, diaphragm, colon, thymus, kidney, lung, ovaries, spleen, intestine and pancreas.

The protein resides in the cytoplasm. It is found in the cytosol. It carries out the reaction RX + glutathione = an S-substituted glutathione + a halide anion + H(+). The enzyme catalyses L-dehydroascorbate + 2 glutathione = glutathione disulfide + L-ascorbate. It catalyses the reaction methylarsonate + 2 glutathione + H(+) = methylarsonous acid + glutathione disulfide + H2O. Exhibits glutathione-dependent thiol transferase and dehydroascorbate reductase activities. Has S-(phenacyl)glutathione reductase activity. Also has glutathione S-transferase activity. Participates in the biotransformation of inorganic arsenic and reduces monomethylarsonic acid (MMA) and dimethylarsonic acid. The protein is Glutathione S-transferase omega-1 (GSTO1) of Sus scrofa (Pig).